Consider the following 157-residue polypeptide: SsrA-binding protein (157 aa).

Belongs to the SmpB family.

Its subcellular location is the cytoplasm. Functionally, required for rescue of stalled ribosomes mediated by trans-translation. Binds to transfer-messenger RNA (tmRNA), required for stable association of tmRNA with ribosomes. tmRNA and SmpB together mimic tRNA shape, replacing the anticodon stem-loop with SmpB. tmRNA is encoded by the ssrA gene; the 2 termini fold to resemble tRNA(Ala) and it encodes a 'tag peptide', a short internal open reading frame. During trans-translation Ala-aminoacylated tmRNA acts like a tRNA, entering the A-site of stalled ribosomes, displacing the stalled mRNA. The ribosome then switches to translate the ORF on the tmRNA; the nascent peptide is terminated with the 'tag peptide' encoded by the tmRNA and targeted for degradation. The ribosome is freed to recommence translation, which seems to be the essential function of trans-translation. The chain is SsrA-binding protein from Chromohalobacter salexigens (strain ATCC BAA-138 / DSM 3043 / CIP 106854 / NCIMB 13768 / 1H11).